Consider the following 484-residue polypeptide: ATP-dependent rRNA helicase RRP3 (484 aa).

2 stretches are compositionally biased toward low complexity: residues 1–14 (MPSP…SMSQ) and 22–34 (PSPA…APEA). The tract at residues 1–38 (MPSPSPEASSSMSQPGPPSRSPSPASSNPDAPEASHNK) is disordered. A Q motif motif is present at residues 38–66 (KTFADLGISPELCRACASMGFKKPSDIQA). Positions 69–240 (IPHALEGKDI…RASLNKPVRV (172 aa)) constitute a Helicase ATP-binding domain. 82–89 (AQTGSGKT) contacts ATP. Positions 188–191 (DEAD) match the DEAD box motif. The Helicase C-terminal domain occupies 263-411 (NKDAYLLYLA…SFDVDKEAVA (149 aa)). The disordered stretch occupies residues 425 to 484 (ALEMRESGTGGGGGKRGRDKGKRKTFGDGDDRDRDDDVVEAGVPRKKNKFTPGGKKKARK). Basic residues-rich tracts occupy residues 439-448 (KRGRDKGKRK) and 468-484 (PRKK…KARK).

Belongs to the DEAD box helicase family. DDX47/RRP3 subfamily. In terms of assembly, interacts with the SSU processome.

The protein resides in the nucleus. It carries out the reaction ATP + H2O = ADP + phosphate + H(+). In terms of biological role, ATP-dependent rRNA helicase required for pre-ribosomal RNA processing. Involved in the maturation of the 35S-pre-rRNA and to its cleavage to mature 18S rRNA. This chain is ATP-dependent rRNA helicase RRP3, found in Cryptococcus neoformans var. neoformans serotype D (strain B-3501A) (Filobasidiella neoformans).